Reading from the N-terminus, the 575-residue chain is Transcription factor E3 (575 aa).

The residue at position 47 (serine 47) is a Phosphoserine; by MTOR. The segment covering 90-126 has biased composition (low complexity); it reads ATLSASSSAGGSRTPAMSSSSSSRVLLRQQLMRAQAQ. The tract at residues 90 to 153 is disordered; that stretch reads ATLSASSSAG…SPAPASPAIS (64 aa). Over residues 127 to 136 the composition is skewed to basic and acidic residues; the sequence is EQERRERREQ. An Asymmetric dimethylarginine modification is found at arginine 188. A disordered region spans residues 211-246; sequence LASQALTPPPGPASAQPLPAPEAAHTTGPTGSAPNS. The segment at 260–271 is strong transcription activation domain; it reads EIDDVIDEIISL. Serine 321 is subject to Phosphoserine; by MTOR. Lysine 339 participates in a covalent cross-link: Glycyl lysine isopeptide (Lys-Gly) (interchain with G-Cter in SUMO2). In terms of domain architecture, bHLH spans 346–399; the sequence is QKKDNHNLIERRRRFNINDRIKELGTLIPKSSDPEMRWNKGTILKASVDYIRKL. A Nuclear localization signal motif is present at residues 356–359; sequence RRRR. Positions 409-430 are leucine-zipper; sequence LESRQRSLEQANRSLQLRIQEL. Disordered stretches follow at residues 473–498 and 534–575; these read GAAT…PPSD and GGLS…EEES. Residues 539–575 are compositionally biased toward low complexity; sequence GALSPLRAASDPLLSSVSPAVSKASSRRSSFSMEEES. A phosphoserine mark is found at serine 542, serine 548, serine 554, serine 556, serine 560, and serine 568.

The protein belongs to the MiT/TFE family. As to quaternary structure, homodimer and heterodimer; with TFEB or MITF. Interacts with RRAGC/RagC GDP-bound and RRAGD/RagD GDP-bound; promoting its recruitment to lysosomal membrane in the presence of nutrients. Interacts with TSC22D1; the interaction is enhanced in the presence of TGF-beta. In terms of processing, sumoylated; does not affect dimerization with MITF. Phosphorylation ar Ser-47 and Ser-321 by MTOR via non-canonical mTORC1 pathway regulates its stability and subcellular location, respectively. When nutrients are present, phosphorylation by MTOR at Ser-47 promotes ubiquitination by the SCF(BTRC) complex, followed by degradation. When nutrients are present, phosphorylation by MTOR at Ser-321 also promotes association with 14-3-3/YWHA adapters and retention in the cytosol. Phosphorylation at Ser-47 plays a more critical role than phosphorylation at Ser-321 for TFE3 inactivation. Inhibition of mTORC1, starvation and lysosomal disruption, promotes dephosphorylation and transcription factor activity. Post-translationally, ubiquitinated by the SCF(BTRC) and SCF(FBXW11) complexes following phosphorylation at Ser-47 by MTOR, leading to its degradation by the proteasome. Ubiquitous in fetal and adult tissues.

It is found in the cytoplasm. Its subcellular location is the cytosol. The protein localises to the nucleus. The protein resides in the lysosome membrane. In terms of biological role, transcription factor that acts as a master regulator of lysosomal biogenesis and immune response. Specifically recognizes and binds E-box sequences (5'-CANNTG-3'); efficient DNA-binding requires dimerization with itself or with another MiT/TFE family member such as TFEB or MITF. Involved in the cellular response to amino acid availability by acting downstream of MTOR: in the presence of nutrients, TFE3 phosphorylation by MTOR promotes its inactivation. Upon starvation or lysosomal stress, inhibition of MTOR induces TFE3 dephosphorylation, resulting in transcription factor activity. Specifically recognizes and binds the CLEAR-box sequence (5'-GTCACGTGAC-3') present in the regulatory region of many lysosomal genes, leading to activate their expression, thereby playing a central role in expression of lysosomal genes. Maintains the pluripotent state of embryonic stem cells by promoting the expression of genes such as ESRRB; mTOR-dependent TFE3 cytosolic retention and inactivation promotes exit from pluripotency. Required to maintain the naive pluripotent state of hematopoietic stem cell; mTOR-dependent cytoplasmic retention of TFE3 promotes the exit of hematopoietic stem cell from pluripotency. TFE3 activity is also involved in the inhibition of neuronal progenitor differentiation. Acts as a positive regulator of browning of adipose tissue by promoting expression of target genes; mTOR-dependent phosphorylation promotes cytoplasmic retention of TFE3 and inhibits browning of adipose tissue. In association with TFEB, activates the expression of CD40L in T-cells, thereby playing a role in T-cell-dependent antibody responses in activated CD4(+) T-cells and thymus-dependent humoral immunity. Specifically recognizes the MUE3 box, a subset of E-boxes, present in the immunoglobulin enhancer. It also binds very well to a USF/MLTF site. Promotes TGF-beta-induced transcription of COL1A2; via its interaction with TSC22D1 at E-boxes in the gene proximal promoter. May regulate lysosomal positioning in response to nutrient deprivation by promoting the expression of PIP4P1. This Homo sapiens (Human) protein is Transcription factor E3.